Consider the following 581-residue polypeptide: ATP-dependent lipid A-core flippase (581 aa).

5 helical membrane passes run 27 to 47, 63 to 83, 154 to 174, 251 to 271, and 279 to 299; these read VFLA…FPAI, MVWL…VIVY, IALI…TLAI, MTPI…FLAL, and GASA…ISPV. The 284-residue stretch at 28–311 folds into the ABC transmembrane type-1 domain; it reads FLAVIGMVGT…LATVNPTIQR (284 aa). One can recognise an ABC transporter domain in the interval 343-579; that stretch reads ICFDNVSLRY…GSYYANLSRL (237 aa). ATP is bound at residue 377–384; sequence GASGGGKS.

It belongs to the ABC transporter superfamily. Lipid exporter (TC 3.A.1.106) family. In terms of assembly, homodimer.

The protein localises to the cell inner membrane. It carries out the reaction ATP + H2O + lipid A-core oligosaccharideSide 1 = ADP + phosphate + lipid A-core oligosaccharideSide 2.. Involved in lipopolysaccharide (LPS) biosynthesis. Translocates lipid A-core from the inner to the outer leaflet of the inner membrane. Transmembrane domains (TMD) form a pore in the inner membrane and the ATP-binding domain (NBD) is responsible for energy generation. This is ATP-dependent lipid A-core flippase from Albidiferax ferrireducens (strain ATCC BAA-621 / DSM 15236 / T118) (Rhodoferax ferrireducens).